The primary structure comprises 152 residues: UPF0735 ACT domain-containing protein SAS1579 (152 aa).

In terms of domain architecture, ACT spans 75-150 (TLILYVTDIV…YVSKVELISM (76 aa)).

It belongs to the UPF0735 family.

The chain is UPF0735 ACT domain-containing protein SAS1579 from Staphylococcus aureus (strain MSSA476).